Consider the following 396-residue polypeptide: Elongation factor Tu 1 (396 aa).

The region spanning 10–206 (KPHVNVGTIG…ALDTYIPTPK (197 aa)) is the tr-type G domain. Residues 19-26 (GHVDHGKT) form a G1 region. 19–26 (GHVDHGKT) contributes to the GTP binding site. Mg(2+) is bound at residue Thr-26. The segment at 60 to 64 (GITIS) is G2. The segment at 81–84 (DCPG) is G3. GTP-binding positions include 81–85 (DCPGH) and 136–139 (NKAD). The G4 stretch occupies residues 136 to 139 (NKAD). Positions 174–176 (SAL) are G5.

It belongs to the TRAFAC class translation factor GTPase superfamily. Classic translation factor GTPase family. EF-Tu/EF-1A subfamily. Monomer.

It localises to the cytoplasm. The enzyme catalyses GTP + H2O = GDP + phosphate + H(+). Functionally, GTP hydrolase that promotes the GTP-dependent binding of aminoacyl-tRNA to the A-site of ribosomes during protein biosynthesis. This chain is Elongation factor Tu 1, found in Ruthia magnifica subsp. Calyptogena magnifica.